A 277-amino-acid chain; its full sequence is Methyltransferase adrK (277 aa).

Residues 123–124 (DL), 150–151 (DV), and 151–152 (VL) contribute to the S-adenosyl-L-methionine site.

It belongs to the class I-like SAM-binding methyltransferase superfamily. As to quaternary structure, homodimer.

Its pathway is secondary metabolite biosynthesis; terpenoid biosynthesis. Methyltransferase; part of the gene cluster that mediates the biosynthesis of andrastins, meroterpenoid compounds that exhibit inhibitory activity against ras farnesyltransferase, suggesting that they could be promising leads for antitumor agents. The first step of the pathway is the synthesis of 3,5-dimethylorsellinic acid (DMOA) by the polyketide synthase adrD via condensation of one acetyl-CoA starter unit with 3 malonyl-CoA units and 2 methylations. DMAO is then converted to farnesyl-DMAO by the prenyltransferase adrG. The methyltransferase adrK catalyzes the methylation of the carboxyl group of farnesyl-DMAO to farnesyl-DMAO methyl ester which is further converted to epoxyfarnesyl-DMAO methyl ester by the FAD-dependent monooxygenase adrH. The terpene cyclase adrI then catalyzes the carbon skeletal rearrangement to generate the andrastin E, the first compound in the pathway having the andrastin scaffold, with the tetracyclic ring system. The post-cyclization tailoring enzymes adrF, adrE, adrJ, and adrA, are involved in the conversion of andrastin E into andrastin A. The short chain dehydrogenase adrF is responsible for the oxidation of the C-3 a hydroxyl group of andrastin E to yield the corresponding ketone, andrastin D. The ketoreductase adrE stereoselectively reduces the carbonyl moiety to reverse the stereochemistry of the C-3 position to yield andrastin F. The acetyltransferase adrJ is the acetyltransferase that attaches the acetyl group to the C-3 hydroxyl group of andrastin F to yield andrastin C. Finally, the cytochrome P450 monooxygenase adrA catalyzes two sequential oxidation reactions of the C-23 methyl group, to generate the corresponding alcohol andrastin B, and aldehyde andrastin A. This Penicillium rubens (strain ATCC 28089 / DSM 1075 / NRRL 1951 / Wisconsin 54-1255) (Penicillium chrysogenum) protein is Methyltransferase adrK.